The sequence spans 376 residues: Erythronate-4-phosphate dehydrogenase (376 aa).

Residues S45 and T67 each contribute to the substrate site. D147 provides a ligand contact to NAD(+). The active site involves R209. D233 serves as a coordination point for NAD(+). E238 is an active-site residue. H255 serves as the catalytic Proton donor. An NAD(+)-binding site is contributed by G258. A substrate-binding site is contributed by Y259.

This sequence belongs to the D-isomer specific 2-hydroxyacid dehydrogenase family. PdxB subfamily. Homodimer.

It localises to the cytoplasm. The catalysed reaction is 4-phospho-D-erythronate + NAD(+) = (R)-3-hydroxy-2-oxo-4-phosphooxybutanoate + NADH + H(+). It functions in the pathway cofactor biosynthesis; pyridoxine 5'-phosphate biosynthesis; pyridoxine 5'-phosphate from D-erythrose 4-phosphate: step 2/5. Catalyzes the oxidation of erythronate-4-phosphate to 3-hydroxy-2-oxo-4-phosphonooxybutanoate. This chain is Erythronate-4-phosphate dehydrogenase, found in Shewanella baltica (strain OS155 / ATCC BAA-1091).